Reading from the N-terminus, the 260-residue chain is MIFHANPGVIDLGVNIDHVATLRNARGTVYPDPIQAALQAEEAGADLITLHLREDRRHIRDADVRALRPKLATRMNLECAITSEMLDIACEIKPQDVCLVPEKREEVTTEGGLDVAGHFEQVSAACRQLADAGIRVSLFIDADPDQIAAAAACKAPVIEIHTGRYADAHTAEEQAAEFRRVAAGVEAGQKHGLIVNAGHGLHYTNVQPIAALPGIKELNIGHAIVAHAVFAGWQNAVREMKAIMVAARLGTRYPVPGQPA.

N15 contributes to the 3-amino-2-oxopropyl phosphate binding site. 17–18 (DH) contacts 1-deoxy-D-xylulose 5-phosphate. R26 provides a ligand contact to 3-amino-2-oxopropyl phosphate. The active-site Proton acceptor is the H51. 1-deoxy-D-xylulose 5-phosphate is bound by residues R53 and H58. E78 acts as the Proton acceptor in catalysis. T108 provides a ligand contact to 1-deoxy-D-xylulose 5-phosphate. H199 functions as the Proton donor in the catalytic mechanism. 3-amino-2-oxopropyl phosphate-binding positions include G200 and 221–222 (GH).

The protein belongs to the PNP synthase family. Homooctamer; tetramer of dimers.

It is found in the cytoplasm. The enzyme catalyses 3-amino-2-oxopropyl phosphate + 1-deoxy-D-xylulose 5-phosphate = pyridoxine 5'-phosphate + phosphate + 2 H2O + H(+). The protein operates within cofactor biosynthesis; pyridoxine 5'-phosphate biosynthesis; pyridoxine 5'-phosphate from D-erythrose 4-phosphate: step 5/5. Functionally, catalyzes the complicated ring closure reaction between the two acyclic compounds 1-deoxy-D-xylulose-5-phosphate (DXP) and 3-amino-2-oxopropyl phosphate (1-amino-acetone-3-phosphate or AAP) to form pyridoxine 5'-phosphate (PNP) and inorganic phosphate. This Cupriavidus metallidurans (strain ATCC 43123 / DSM 2839 / NBRC 102507 / CH34) (Ralstonia metallidurans) protein is Pyridoxine 5'-phosphate synthase.